Reading from the N-terminus, the 652-residue chain is Sodium-dependent nutrient amino acid transporter 1 (652 aa).

The interval 1 to 54 (MELKGVHQQNGTSNGTGAVGAEGESAPPTAPATAEAAASLETTTEKVDAEQQKP) is disordered. The Cytoplasmic segment spans residues 1–58 (MELKGVHQQNGTSNGTGAVGAEGESAPPTAPATAEAAASLETTTEKVDAEQQKPERTN). Polar residues predominate over residues 7–16 (HQQNGTSNGT). Over residues 21–42 (AEGESAPPTAPATAEAAASLET) the composition is skewed to low complexity. Basic and acidic residues predominate over residues 43–54 (TTEKVDAEQQKP). 4 consecutive transmembrane segments (helical) span residues 59-79 (WGNGLEFLMSCISVSVGLGNV), 92-112 (GAFLIPYIIVLFLIGKPMYYL), 130-150 (VVPGFVGVGYGQAFATICIIT), and 155-175 (LLALTLYYLFVSFQSVLPWSY). N-linked (GlcNAc...) asparagine glycans are attached at residues Asn-201 and Asn-204. 9 helical membrane-spanning segments follow: residues 240-260 (PDWKLTLALFVSWVVIFLVIM), 269-289 (AAYFLALFPYVVLFILLVRAV), 318-338 (AVVQCFFSLAVGSGPIIMFAS), 352-372 (IVTTLDTLTSLLGGITIFAIL), 412-432 (LFSVLFFFMLFVLGIGSIVAL), 458-478 (ICGFLMGLVYVTPGGQWILTL), 485-505 (TYVVFILAIFELAGIVWIYGM), 527-547 (CWSFFTPVMMIVIFIYSMVTI), and 564-584 (AGWLLFGIGAAQFPLWWMWYI).

This sequence belongs to the sodium:neurotransmitter symporter (SNF) (TC 2.A.22) family.

It is found in the membrane. Its function is as follows. Unusual broad substrate spectrum amino acid:sodium cotransporter that promotes absorption of the D isomers of essential amino acids. Neutral amino acids are the preferred substrates, especially methionine and phenylalanine. The protein is Sodium-dependent nutrient amino acid transporter 1 of Drosophila persimilis (Fruit fly).